The sequence spans 274 residues: Acetyl-coenzyme A carboxylase carboxyl transferase subunit alpha (274 aa).

The region spanning 2-250 (NKEFIKSIVV…KKEIMNAMNE (249 aa)) is the CoA carboxyltransferase C-terminal domain.

Belongs to the AccA family. In terms of assembly, acetyl-CoA carboxylase is a heterohexamer composed of biotin carboxyl carrier protein (AccB), biotin carboxylase (AccC) and two subunits each of ACCase subunit alpha (AccA) and ACCase subunit beta (AccD).

It is found in the cytoplasm. The enzyme catalyses N(6)-carboxybiotinyl-L-lysyl-[protein] + acetyl-CoA = N(6)-biotinyl-L-lysyl-[protein] + malonyl-CoA. It participates in lipid metabolism; malonyl-CoA biosynthesis; malonyl-CoA from acetyl-CoA: step 1/1. Component of the acetyl coenzyme A carboxylase (ACC) complex. First, biotin carboxylase catalyzes the carboxylation of biotin on its carrier protein (BCCP) and then the CO(2) group is transferred by the carboxyltransferase to acetyl-CoA to form malonyl-CoA. The polypeptide is Acetyl-coenzyme A carboxylase carboxyl transferase subunit alpha (Clostridium botulinum (strain Alaska E43 / Type E3)).